The chain runs to 474 residues: Glutamate--tRNA ligase (474 aa).

A 'HIGH' region motif is present at residues 9–19 (PSPTGFLHVGG). Residues 240-244 (KLSKR) carry the 'KMSKS' region motif. Lys243 contacts ATP.

This sequence belongs to the class-I aminoacyl-tRNA synthetase family. Glutamate--tRNA ligase type 1 subfamily. Monomer.

Its subcellular location is the cytoplasm. The catalysed reaction is tRNA(Glu) + L-glutamate + ATP = L-glutamyl-tRNA(Glu) + AMP + diphosphate. Its function is as follows. Catalyzes the attachment of glutamate to tRNA(Glu) in a two-step reaction: glutamate is first activated by ATP to form Glu-AMP and then transferred to the acceptor end of tRNA(Glu). In Photobacterium profundum (strain SS9), this protein is Glutamate--tRNA ligase.